A 592-amino-acid chain; its full sequence is Prospero homeobox protein 2 (592 aa).

Disordered stretches follow at residues 20–56 (EACT…PEWF), 85–129 (GNAQ…RKGG), 155–218 (KPRD…LPSG), 308–336 (RLDS…PLTA), and 353–382 (RYNN…LRPW). Residues 95 to 106 (CPKKARERKRKQ) are compositionally biased toward basic residues. Residues 201–211 (SGAEKHQESEK) are compositionally biased toward basic and acidic residues. Pro residues predominate over residues 314 to 331 (YPIPPRMTPKPCQDPPAN). Residues 360–377 (SSSPPQDSSSQRHPSSEP) show a composition bias toward low complexity. One can recognise a Prospero-type homeo domain in the interval 437 to 495 (QEGLNPGHLKKAKLMFFFTRYPSSNLLKVYFPDVQFNRCITSQMIKWFSNFREFYYIQM). Residues 437–592 (QEGLNPGHLK…EIFKSSSYPQ (156 aa)) are homeo-Prospero. One can recognise a Prospero domain in the interval 496 to 592 (EKSARQAISD…EIFKSSSYPQ (97 aa)).

The protein belongs to the Prospero homeodomain family.

It is found in the nucleus. In terms of biological role, transcription regulator. Does not seem to be essential for embryonic development and postnatal survival. This is Prospero homeobox protein 2 (PROX2) from Homo sapiens (Human).